The chain runs to 464 residues: tRNA-2-methylthio-N(6)-dimethylallyladenosine synthase (464 aa).

Positions 19-135 constitute an MTTase N-terminal domain; it reads GSYWITTFGC…LENLLERVDS (117 aa). [4Fe-4S] cluster is bound by residues Cys28, Cys64, Cys98, Cys170, Cys174, and Cys177. In terms of domain architecture, Radical SAM core spans 156–393; the sequence is RDSTICGWVN…NELVEATSRK (238 aa). Residues 396–464 enclose the TRAM domain; that stretch reads QRYLNNTESV…SFSLSGQIYK (69 aa).

It belongs to the methylthiotransferase family. MiaB subfamily. Monomer. Requires [4Fe-4S] cluster as cofactor.

The protein resides in the cytoplasm. It carries out the reaction N(6)-dimethylallyladenosine(37) in tRNA + (sulfur carrier)-SH + AH2 + 2 S-adenosyl-L-methionine = 2-methylsulfanyl-N(6)-dimethylallyladenosine(37) in tRNA + (sulfur carrier)-H + 5'-deoxyadenosine + L-methionine + A + S-adenosyl-L-homocysteine + 2 H(+). Its function is as follows. Catalyzes the methylthiolation of N6-(dimethylallyl)adenosine (i(6)A), leading to the formation of 2-methylthio-N6-(dimethylallyl)adenosine (ms(2)i(6)A) at position 37 in tRNAs that read codons beginning with uridine. The sequence is that of tRNA-2-methylthio-N(6)-dimethylallyladenosine synthase from Prochlorococcus marinus (strain MIT 9515).